The following is a 267-amino-acid chain: 3-methyl-2-oxobutanoate hydroxymethyltransferase (267 aa).

2 residues coordinate Mg(2+): D46 and D85. 3-methyl-2-oxobutanoate contacts are provided by residues 46–47 (DS), D85, and K115. E117 contacts Mg(2+). Residue E184 is the Proton acceptor of the active site.

Belongs to the PanB family. Homodecamer; pentamer of dimers. The cofactor is Mg(2+).

It is found in the cytoplasm. It catalyses the reaction 3-methyl-2-oxobutanoate + (6R)-5,10-methylene-5,6,7,8-tetrahydrofolate + H2O = 2-dehydropantoate + (6S)-5,6,7,8-tetrahydrofolate. It functions in the pathway cofactor biosynthesis; (R)-pantothenate biosynthesis; (R)-pantoate from 3-methyl-2-oxobutanoate: step 1/2. Catalyzes the reversible reaction in which hydroxymethyl group from 5,10-methylenetetrahydrofolate is transferred onto alpha-ketoisovalerate to form ketopantoate. This chain is 3-methyl-2-oxobutanoate hydroxymethyltransferase, found in Geotalea daltonii (strain DSM 22248 / JCM 15807 / FRC-32) (Geobacter daltonii).